The primary structure comprises 261 residues: DNA repair protein RecO (261 aa).

The protein belongs to the RecO family.

In terms of biological role, involved in DNA repair and RecF pathway recombination. This chain is DNA repair protein RecO, found in Chlorobium phaeobacteroides (strain BS1).